The following is a 310-amino-acid chain: Hairy/enhancer-of-split related with YRPW motif-like protein (310 aa).

The disordered stretch occupies residues M1–G21. Residues S12–G21 are compositionally biased toward acidic residues. The region spanning A43–L98 is the bHLH domain. One can recognise an Orange domain in the interval Y116–L152. 2 stretches are compositionally biased toward low complexity: residues L182–T192 and P261–P273. 2 disordered regions span residues L182 to A208 and H248 to F310. The span at L293–A302 shows a compositional bias: polar residues.

It belongs to the HEY family.

The protein localises to the nucleus. Functionally, transcriptional repressor which functions as a downstream effector of Notch signaling. The chain is Hairy/enhancer-of-split related with YRPW motif-like protein (heyl) from Danio rerio (Zebrafish).